The sequence spans 210 residues: Ion-translocating oxidoreductase complex subunit G (210 aa).

Residues 9-29 (GVTLAVFAAITTGLTAVINAV) form a helical membrane-spanning segment. Threonine 175 carries the post-translational modification FMN phosphoryl threonine.

Belongs to the RnfG family. In terms of assembly, the complex is composed of six subunits: RnfA, RnfB, RnfC, RnfD, RnfE and RnfG. The cofactor is FMN.

The protein localises to the cell inner membrane. Part of a membrane-bound complex that couples electron transfer with translocation of ions across the membrane. In Erwinia tasmaniensis (strain DSM 17950 / CFBP 7177 / CIP 109463 / NCPPB 4357 / Et1/99), this protein is Ion-translocating oxidoreductase complex subunit G.